The sequence spans 829 residues: Ent-cassa-12,15-diene synthase (829 aa).

The tract at residues Met1–Asp50 is disordered. Positions Gly23–Ser37 are enriched in polar residues. Mg(2+)-binding residues include Asp576, Asp580, Asn720, and Glu728. A DDXXD motif motif is present at residues Asp576–Asp580.

It belongs to the terpene synthase family. Mg(2+) serves as cofactor. As to expression, expressed in roots and stems.

It catalyses the reaction ent-copalyl diphosphate = ent-cassa-12,15-diene + diphosphate. Its function is as follows. Involved in phytocassane phytoalexins biosynthesis. Catalyzes the conversion of ent-copalyl diphosphate to the phytoalexin precursor ent-cassa-12,15-diene. In Oryza sativa subsp. japonica (Rice), this protein is Ent-cassa-12,15-diene synthase (KSL7).